Here is a 711-residue protein sequence, read N- to C-terminus: Ribosomal RNA large subunit methyltransferase K/L (711 aa).

The THUMP domain occupies leucine 43–phenylalanine 154.

It belongs to the methyltransferase superfamily. RlmKL family.

It localises to the cytoplasm. The enzyme catalyses guanosine(2445) in 23S rRNA + S-adenosyl-L-methionine = N(2)-methylguanosine(2445) in 23S rRNA + S-adenosyl-L-homocysteine + H(+). It carries out the reaction guanosine(2069) in 23S rRNA + S-adenosyl-L-methionine = N(2)-methylguanosine(2069) in 23S rRNA + S-adenosyl-L-homocysteine + H(+). In terms of biological role, specifically methylates the guanine in position 2445 (m2G2445) and the guanine in position 2069 (m7G2069) of 23S rRNA. This chain is Ribosomal RNA large subunit methyltransferase K/L, found in Shewanella loihica (strain ATCC BAA-1088 / PV-4).